Consider the following 226-residue polypeptide: Phosphoglycolate phosphatase (226 aa).

The Nucleophile role is filled by D12. Mg(2+)-binding residues include D12, D14, and D177.

Belongs to the HAD-like hydrolase superfamily. CbbY/CbbZ/Gph/YieH family. Mg(2+) serves as cofactor.

The enzyme catalyses 2-phosphoglycolate + H2O = glycolate + phosphate. It functions in the pathway organic acid metabolism; glycolate biosynthesis; glycolate from 2-phosphoglycolate: step 1/1. In terms of biological role, specifically catalyzes the dephosphorylation of 2-phosphoglycolate. Is involved in the dissimilation of the intracellular 2-phosphoglycolate formed during the DNA repair of 3'-phosphoglycolate ends, a major class of DNA lesions induced by oxidative stress. This chain is Phosphoglycolate phosphatase, found in Colwellia psychrerythraea (strain 34H / ATCC BAA-681) (Vibrio psychroerythus).